Consider the following 235-residue polypeptide: Aspartate/glutamate leucyltransferase (235 aa).

This sequence belongs to the R-transferase family. Bpt subfamily.

Its subcellular location is the cytoplasm. The enzyme catalyses N-terminal L-glutamyl-[protein] + L-leucyl-tRNA(Leu) = N-terminal L-leucyl-L-glutamyl-[protein] + tRNA(Leu) + H(+). The catalysed reaction is N-terminal L-aspartyl-[protein] + L-leucyl-tRNA(Leu) = N-terminal L-leucyl-L-aspartyl-[protein] + tRNA(Leu) + H(+). Functions in the N-end rule pathway of protein degradation where it conjugates Leu from its aminoacyl-tRNA to the N-termini of proteins containing an N-terminal aspartate or glutamate. The polypeptide is Aspartate/glutamate leucyltransferase (Pseudomonas fluorescens (strain SBW25)).